The sequence spans 102 residues: 10 kDa heat shock protein, mitochondrial (102 aa).

The protein belongs to the GroES chaperonin family. As to quaternary structure, homohexamer.

It is found in the mitochondrion matrix. In terms of biological role, eukaryotic CPN10 homolog which is essential for mitochondrial protein biogenesis, together with CPN60. Binds to CPN60 in the presence of Mg-ATP and suppresses the ATPase activity of the latter. The chain is 10 kDa heat shock protein, mitochondrial from Schistosoma japonicum (Blood fluke).